A 320-amino-acid chain; its full sequence is Homeobox-leucine zipper protein HOX25 (320 aa).

Positions 79-139 (AAARKRRLTA…NRRARWKTKQ (61 aa)) form a DNA-binding region, homeobox. The tract at residues 138 to 182 (KQLELDFDRLRAAHDELLAGRTALAADNESLRSQVILLTEKLQAN) is leucine-zipper. Disordered stretches follow at residues 181–209 (ANGKSPSPSPAPAEQTAVPAAPESAKSFQ) and 249–282 (DSPESYFAGARSPPSSSEDDCGGAGSDDDYPSSS). The span at 265-278 (SEDDCGGAGSDDDY) shows a compositional bias: acidic residues.

This sequence belongs to the HD-ZIP homeobox family. Class I subfamily. In terms of tissue distribution, expressed in roots, leaf sheaths and blades and panicles.

The protein localises to the nucleus. Its function is as follows. Probable transcription factor. The polypeptide is Homeobox-leucine zipper protein HOX25 (HOX25) (Oryza sativa subsp. japonica (Rice)).